We begin with the raw amino-acid sequence, 145 residues long: Salt stress-induced protein (145 aa).

Residues 3 to 145 (LVKIGLWGGN…IDAIGIYVHP (143 aa)) enclose the Jacalin-type lectin domain. 2 tandem repeats follow at residues 6–15 (IGLWGGNGGS) and 54–64 (IGPWGGGEGTS). The tract at residues 6-64 (IGLWGGNGGSAQDISVPPKKLLGVTIYSSDAIRSIAFNYIGVDGQEYAIGPWGGGEGTS) is 2 X approximate repeats, Gly-rich.

Sheaths and roots from mature plants and seedlings.

In Oryza sativa subsp. indica (Rice), this protein is Salt stress-induced protein (SALT).